Consider the following 435-residue polypeptide: Serine hydroxymethyltransferase (435 aa).

Residues leucine 131 and 135 to 137 each bind (6S)-5,6,7,8-tetrahydrofolate; that span reads GHL. An N6-(pyridoxal phosphate)lysine modification is found at lysine 240.

This sequence belongs to the SHMT family. As to quaternary structure, homodimer. The cofactor is pyridoxal 5'-phosphate.

Its subcellular location is the cytoplasm. The enzyme catalyses (6R)-5,10-methylene-5,6,7,8-tetrahydrofolate + glycine + H2O = (6S)-5,6,7,8-tetrahydrofolate + L-serine. It functions in the pathway one-carbon metabolism; tetrahydrofolate interconversion. The protein operates within amino-acid biosynthesis; glycine biosynthesis; glycine from L-serine: step 1/1. Functionally, catalyzes the reversible interconversion of serine and glycine with tetrahydrofolate (THF) serving as the one-carbon carrier. This reaction serves as the major source of one-carbon groups required for the biosynthesis of purines, thymidylate, methionine, and other important biomolecules. Also exhibits THF-independent aldolase activity toward beta-hydroxyamino acids, producing glycine and aldehydes, via a retro-aldol mechanism. This chain is Serine hydroxymethyltransferase, found in Bifidobacterium longum subsp. infantis (strain ATCC 15697 / DSM 20088 / JCM 1222 / NCTC 11817 / S12).